A 268-amino-acid polypeptide reads, in one-letter code: UPF0719 transmembrane protein aq_1349 (268 aa).

8 helical membrane passes run 5-24 (LIAL…LFFR), 37-59 (NLAL…YSVY), 69-91 (LYLI…IFLR), 104-126 (AGAG…ASFW), 130-152 (SFIL…LFIS), 173-195 (FSAS…GAIS), 210-232 (VLYF…FLLF), and 245-267 (NLSA…LAVM).

This sequence belongs to the UPF0719 family.

Its subcellular location is the cell membrane. The sequence is that of UPF0719 transmembrane protein aq_1349 from Aquifex aeolicus (strain VF5).